Here is a 669-residue protein sequence, read N- to C-terminus: Protein adenylyltransferase SelO, mitochondrial (669 aa).

The transit peptide at 1–115 (MAVYRAALGA…LGLGAPPARE (115 aa)) directs the protein to the mitochondrion. ATP is bound by residues glycine 153, glycine 155, lysine 176, aspartate 188, glycine 189, arginine 246, and arginine 253. Aspartate 338 functions as the Proton acceptor in the catalytic mechanism. Asparagine 339 and aspartate 348 together coordinate Mg(2+). An ATP-binding site is contributed by aspartate 348. The segment at 634–654 (ATDAEATEADGADGRQRSYSS) is disordered. Phosphothreonine is present on threonine 635. A Phosphoserine modification is found at serine 653. Position 667 (selenocysteine 667) is a non-standard amino acid, selenocysteine.

It belongs to the SELO family. Mg(2+) serves as cofactor.

It is found in the mitochondrion. The catalysed reaction is L-tyrosyl-[protein] + ATP = O-(5'-adenylyl)-L-tyrosyl-[protein] + diphosphate. It carries out the reaction L-threonyl-[protein] + ATP = 3-O-(5'-adenylyl)-L-threonyl-[protein] + diphosphate. The enzyme catalyses L-seryl-[protein] + ATP = 3-O-(5'-adenylyl)-L-seryl-[protein] + diphosphate. Functionally, catalyzes the transfer of adenosine 5'-monophosphate (AMP) to Ser, Thr and Tyr residues of target proteins (AMPylation). May be a redox-active mitochondrial selenoprotein which interacts with a redox target protein. The chain is Protein adenylyltransferase SelO, mitochondrial from Homo sapiens (Human).